A 151-amino-acid chain; its full sequence is SsrA-binding protein (151 aa).

This sequence belongs to the SmpB family.

Its subcellular location is the cytoplasm. In terms of biological role, required for rescue of stalled ribosomes mediated by trans-translation. Binds to transfer-messenger RNA (tmRNA), required for stable association of tmRNA with ribosomes. tmRNA and SmpB together mimic tRNA shape, replacing the anticodon stem-loop with SmpB. tmRNA is encoded by the ssrA gene; the 2 termini fold to resemble tRNA(Ala) and it encodes a 'tag peptide', a short internal open reading frame. During trans-translation Ala-aminoacylated tmRNA acts like a tRNA, entering the A-site of stalled ribosomes, displacing the stalled mRNA. The ribosome then switches to translate the ORF on the tmRNA; the nascent peptide is terminated with the 'tag peptide' encoded by the tmRNA and targeted for degradation. The ribosome is freed to recommence translation, which seems to be the essential function of trans-translation. The protein is SsrA-binding protein of Nitrosomonas europaea (strain ATCC 19718 / CIP 103999 / KCTC 2705 / NBRC 14298).